A 151-amino-acid chain; its full sequence is Large-conductance mechanosensitive channel (151 aa).

The next 2 helical transmembrane spans lie at 12 to 32 (GNIV…ALVT) and 71 to 91 (VLLS…FLVV). The interval 122 to 151 (AQTNGDSPGRHGGRGTPSPTDGPRASTESQ) is disordered.

The protein belongs to the MscL family. As to quaternary structure, homopentamer.

It is found in the cell membrane. In terms of biological role, channel that opens in response to stretch forces in the membrane lipid bilayer. May participate in the regulation of osmotic pressure changes within the cell. This chain is Large-conductance mechanosensitive channel, found in Mycobacterium tuberculosis (strain CDC 1551 / Oshkosh).